We begin with the raw amino-acid sequence, 974 residues long: Membrane-associated phosphatidylinositol transfer protein 3 (974 aa).

Phosphoserine occurs at positions 30, 31, 109, 295, 298, 321, 343, and 495. The interval Gly-284–Val-304 is disordered. Polar residues predominate over residues Arg-292 to Thr-302. Disordered regions lie at residues Ile-323 to Ser-346 and Ser-491 to Pro-536. One can recognise a DDHD domain in the interval Phe-390–Arg-594. The segment covering Glu-520–Ser-533 has biased composition (low complexity). 4 positions are modified to phosphoserine: Ser-612, Ser-907, Ser-928, and Ser-946. A disordered region spans residues Met-927–Pro-974.

This sequence belongs to the PtdIns transfer protein family. PI transfer class IIA subfamily. As to quaternary structure, interacts with PTK2B via its C-terminus. Detected in brain and spleen, and at low levels in ovary.

The protein resides in the endomembrane system. Functionally, catalyzes the transfer of phosphatidylinositol and phosphatidylcholine between membranes (in vitro). Binds calcium ions. This Homo sapiens (Human) protein is Membrane-associated phosphatidylinositol transfer protein 3 (PITPNM3).